Reading from the N-terminus, the 257-residue chain is Acetylglutamate kinase (257 aa).

Residues 43 to 44 (GG), Arg65, and Asn157 contribute to the substrate site. ATP-binding positions include 180-185 (DVSGIL) and 208-210 (IIT).

Belongs to the acetylglutamate kinase family. ArgB subfamily. As to quaternary structure, homodimer.

It localises to the cytoplasm. The enzyme catalyses N-acetyl-L-glutamate + ATP = N-acetyl-L-glutamyl 5-phosphate + ADP. It participates in amino-acid biosynthesis; L-arginine biosynthesis; N(2)-acetyl-L-ornithine from L-glutamate: step 2/4. In terms of biological role, catalyzes the ATP-dependent phosphorylation of N-acetyl-L-glutamate. The chain is Acetylglutamate kinase from Salmonella paratyphi A (strain AKU_12601).